Here is a 640-residue protein sequence, read N- to C-terminus: Threonine--tRNA ligase (640 aa).

Residues 1 to 61 form the TGS domain; sequence MPIIALPDGN…EKDSEVNIIT (61 aa). The tract at residues 242–533 is catalytic; sequence DHRRIAKQMS…LIEHYAGRLP (292 aa). Residues Cys333, His384, and His510 each coordinate Zn(2+).

It belongs to the class-II aminoacyl-tRNA synthetase family. As to quaternary structure, homodimer. Zn(2+) is required as a cofactor.

It is found in the cytoplasm. The enzyme catalyses tRNA(Thr) + L-threonine + ATP = L-threonyl-tRNA(Thr) + AMP + diphosphate + H(+). Catalyzes the attachment of threonine to tRNA(Thr) in a two-step reaction: L-threonine is first activated by ATP to form Thr-AMP and then transferred to the acceptor end of tRNA(Thr). Also edits incorrectly charged L-seryl-tRNA(Thr). In Prochlorococcus marinus (strain MIT 9313), this protein is Threonine--tRNA ligase.